The sequence spans 312 residues: Malate dehydrogenase (312 aa).

NAD(+) contacts are provided by residues 12–17 (GAGFTG) and D36. Substrate is bound by residues R87 and R93. Residues N100 and 123-125 (LTN) each bind NAD(+). N125 serves as a coordination point for substrate. S149 is subject to Phosphoserine. Position 156 (R156) interacts with substrate. H180 (proton acceptor) is an active-site residue.

This sequence belongs to the LDH/MDH superfamily. MDH type 3 family.

It catalyses the reaction (S)-malate + NAD(+) = oxaloacetate + NADH + H(+). Functionally, catalyzes the reversible oxidation of malate to oxaloacetate. The sequence is that of Malate dehydrogenase from Anoxybacillus flavithermus (strain DSM 21510 / WK1).